Consider the following 663-residue polypeptide: Transketolase 1 (663 aa).

Substrate is bound at residue His26. Position 46 is an N6-acetyllysine (Lys46). Residues His66 and Gly114–Leu116 contribute to the thiamine diphosphate site. Position 155 (Asp155) interacts with Mg(2+). Thiamine diphosphate is bound by residues Gly156 and Asn185. The Mg(2+) site is built by Asn185 and Ile187. Positions 261, 358, and 385 each coordinate substrate. His261 is a binding site for thiamine diphosphate. Glu411 serves as the catalytic Proton donor. Phe437 contacts thiamine diphosphate. Positions 461, 469, 473, and 520 each coordinate substrate.

This sequence belongs to the transketolase family. In terms of assembly, homodimer. Mg(2+) serves as cofactor. Ca(2+) is required as a cofactor. It depends on Mn(2+) as a cofactor. The cofactor is Co(2+). Requires thiamine diphosphate as cofactor.

It carries out the reaction D-sedoheptulose 7-phosphate + D-glyceraldehyde 3-phosphate = aldehydo-D-ribose 5-phosphate + D-xylulose 5-phosphate. Functionally, catalyzes the transfer of a two-carbon ketol group from a ketose donor to an aldose acceptor, via a covalent intermediate with the cofactor thiamine pyrophosphate. Thus, catalyzes the reversible transfer of a two-carbon ketol group from sedoheptulose-7-phosphate to glyceraldehyde-3-phosphate, producing xylulose-5-phosphate and ribose-5-phosphate. This chain is Transketolase 1 (tktA), found in Escherichia coli (strain K12).